The following is a 187-amino-acid chain: Holliday junction branch migration complex subunit RuvA (187 aa).

The interval M1–K64 is domain I. The tract at residues R65–V136 is domain II. Residues V136–P139 form a flexible linker region. Residues K140 to K187 are domain III.

This sequence belongs to the RuvA family. In terms of assembly, homotetramer. Forms an RuvA(8)-RuvB(12)-Holliday junction (HJ) complex. HJ DNA is sandwiched between 2 RuvA tetramers; dsDNA enters through RuvA and exits via RuvB. An RuvB hexamer assembles on each DNA strand where it exits the tetramer. Each RuvB hexamer is contacted by two RuvA subunits (via domain III) on 2 adjacent RuvB subunits; this complex drives branch migration. In the full resolvosome a probable DNA-RuvA(4)-RuvB(12)-RuvC(2) complex forms which resolves the HJ.

Its subcellular location is the cytoplasm. Functionally, the RuvA-RuvB-RuvC complex processes Holliday junction (HJ) DNA during genetic recombination and DNA repair, while the RuvA-RuvB complex plays an important role in the rescue of blocked DNA replication forks via replication fork reversal (RFR). RuvA specifically binds to HJ cruciform DNA, conferring on it an open structure. The RuvB hexamer acts as an ATP-dependent pump, pulling dsDNA into and through the RuvAB complex. HJ branch migration allows RuvC to scan DNA until it finds its consensus sequence, where it cleaves and resolves the cruciform DNA. In Caldanaerobacter subterraneus subsp. tengcongensis (strain DSM 15242 / JCM 11007 / NBRC 100824 / MB4) (Thermoanaerobacter tengcongensis), this protein is Holliday junction branch migration complex subunit RuvA.